The primary structure comprises 360 residues: UDP-N-acetylglucosamine--N-acetylmuramyl-(pentapeptide) pyrophosphoryl-undecaprenol N-acetylglucosamine transferase (360 aa).

UDP-N-acetyl-alpha-D-glucosamine-binding positions include 12 to 14 (TGG), Asn-124, Arg-161, Ser-189, Ile-243, and Gln-288.

Belongs to the glycosyltransferase 28 family. MurG subfamily.

Its subcellular location is the cell inner membrane. The enzyme catalyses di-trans,octa-cis-undecaprenyl diphospho-N-acetyl-alpha-D-muramoyl-L-alanyl-D-glutamyl-meso-2,6-diaminopimeloyl-D-alanyl-D-alanine + UDP-N-acetyl-alpha-D-glucosamine = di-trans,octa-cis-undecaprenyl diphospho-[N-acetyl-alpha-D-glucosaminyl-(1-&gt;4)]-N-acetyl-alpha-D-muramoyl-L-alanyl-D-glutamyl-meso-2,6-diaminopimeloyl-D-alanyl-D-alanine + UDP + H(+). It participates in cell wall biogenesis; peptidoglycan biosynthesis. In terms of biological role, cell wall formation. Catalyzes the transfer of a GlcNAc subunit on undecaprenyl-pyrophosphoryl-MurNAc-pentapeptide (lipid intermediate I) to form undecaprenyl-pyrophosphoryl-MurNAc-(pentapeptide)GlcNAc (lipid intermediate II). The sequence is that of UDP-N-acetylglucosamine--N-acetylmuramyl-(pentapeptide) pyrophosphoryl-undecaprenol N-acetylglucosamine transferase from Acidithiobacillus ferrooxidans (strain ATCC 23270 / DSM 14882 / CIP 104768 / NCIMB 8455) (Ferrobacillus ferrooxidans (strain ATCC 23270)).